Consider the following 503-residue polypeptide: Probable DNA double-strand break repair helicase HerA (503 aa).

Residues arginine 122, glycine 131–asparagine 136, and lysine 478–isoleucine 479 each bind ATP.

It belongs to the HerA family.

The enzyme catalyses Couples ATP hydrolysis with the unwinding of duplex DNA at the replication fork by translocating in the 5'-3' direction. This creates two antiparallel DNA single strands (ssDNA). The leading ssDNA polymer is the template for DNA polymerase III holoenzyme which synthesizes a continuous strand.. It catalyses the reaction ATP + H2O = ADP + phosphate + H(+). It carries out the reaction Couples ATP hydrolysis with the unwinding of duplex DNA by translocating in the 3'-5' direction.. Involved in DNA double-strand break (DSB) repair. Probably acts with NurA to stimulate resection of the 5' strand and produce the long 3' single-strand that is required for RadA loading. Has DNA-dependent ATPase activity and DNA helicase activity. The chain is Probable DNA double-strand break repair helicase HerA from Methanocaldococcus jannaschii (strain ATCC 43067 / DSM 2661 / JAL-1 / JCM 10045 / NBRC 100440) (Methanococcus jannaschii).